The sequence spans 152 residues: UPF0225 protein YchJ (152 aa).

This sequence belongs to the UPF0225 family.

In Escherichia coli O127:H6 (strain E2348/69 / EPEC), this protein is UPF0225 protein YchJ.